Consider the following 152-residue polypeptide: UPF0178 protein YaiI (152 aa).

The protein belongs to the UPF0178 family.

The sequence is that of UPF0178 protein YaiI from Escherichia coli O6:K15:H31 (strain 536 / UPEC).